Here is a 976-residue protein sequence, read N- to C-terminus: Collagen alpha-1(I) chain (976 aa).

At Ser1 the chain carries Phosphoserine. The disordered stretch occupies residues 1–976 (SAGGISVPGP…PGPPGPPGPP (976 aa)). A 4-hydroxyproline mark is found at Pro20, Pro23, Pro26, Pro35, Pro38, Pro41, Pro55, Pro70, Pro76, Pro85, and Pro91. Residues 58-72 (NGDDGEAGKPGRPGE) are compositionally biased toward basic and acidic residues. Lys94 bears the 5-hydroxylysine; alternate mark. An O-linked (Gal...) hydroxylysine; alternate glycan is attached at Lys94. A Phosphoserine modification is found at Ser100. Composition is skewed to low complexity over residues 108-118 (DAGPAGPKGAP) and 132-150 (PGAS…TGAA). Pro118, Pro132, Pro153, Pro162, Pro165, Pro192, Pro195, Pro207, Pro213, Pro222, Pro228, Pro231, and Pro246 each carry 4-hydroxyproline. The span at 152–164 (PPGPTGPAGPPGF) shows a compositional bias: pro residues. The segment covering 198–237 (AGAAGPAGNPGADGQPGAKGANGAPGIAGAPGFPGARGPS) has biased composition (low complexity). Lys249 is subject to 5-hydroxylysine. 4-hydroxyproline is present on residues Pro255, Pro258, Pro266, Pro275, Pro290, Pro296, Pro304, and Pro310. Over residues 294–308 (GLPGPGERGGPGSRG) the composition is skewed to gly residues. At Lys319 the chain carries 5-hydroxylysine. 4-hydroxyproline occurs at positions 328, 337, 343, 349, 358, 361, 370, 379, 385, 397, 406, 415, 418, 436, 453, 459, 465, 471, 477, 483, 495, 504, 517, 523, and 532. The span at 352-378 (KGLTGSPGSPGPDGKTGPPGPAGQDGR) shows a compositional bias: low complexity. The segment covering 387 to 406 (ARGQAGVMGFPGPKGAAGEP) has biased composition (low complexity). Over residues 465–474 (PGEAGKPGEQ) the composition is skewed to low complexity. The residue at position 544 (Lys544) is a 5-hydroxylysine. Pro550, Pro565, and Pro571 each carry 4-hydroxyproline. Positions 577–591 (SGPSGPAGPTGARGA) are enriched in low complexity. Ser580 carries the phosphoserine modification. 4-hydroxyproline occurs at positions 592, 598, 601, 610, 616, 634, 643, and 652. A compositionally biased stretch (low complexity) spans 604–631 (AGFAGPPGADGQPGAKGEPGDAGAKGDA). Residue Lys655 is modified to 5-hydroxylysine. The segment covering 660-676 (SAGPPGATGFPGAAGRV) has biased composition (low complexity). Residues Pro664 and Pro670 each carry the 4-hydroxyproline modification. Pro678 carries the post-translational modification 3-hydroxyproline. 4-hydroxyproline occurs at positions 679, 688, 691, 718, 726, 735, 753, 762, 765, 771, 786, 792, 798, 806, and 812. The segment covering 723 to 735 (KGSPGADGPAGAP) has biased composition (low complexity). Over residues 785 to 795 (PPGPMGPPGLA) the composition is skewed to pro residues. Lys821 is subject to 5-hydroxylysine. Residues 829–844 (PGPPGAPGAPGAPGPV) show a composition bias toward pro residues. Pro832, Pro835, and Pro838 each carry 4-hydroxyproline. Residues 864–878 (AGPAGARGPAGPQGP) are compositionally biased toward low complexity. Over residues 879-893 (RGDKGETGEQGDRGI) the composition is skewed to basic and acidic residues. The residue at position 882 (Lys882) is a 5-hydroxylysine. Lys894 is subject to 5-hydroxylysine; alternate. A glycan (O-linked (Gal...) hydroxylysine; alternate) is linked at Lys894. Residues Pro907, Pro910, Pro928, and Pro943 each carry the 4-hydroxyproline modification. The span at 910–943 (PGEQGPSGASGPAGPRGPPGSAGSPGKDGLNGLP) shows a compositional bias: low complexity. Pro948 carries the 3-hydroxyproline modification. 4-hydroxyproline is present on Pro949. Pro residues predominate over residues 961 to 976 (VGPPGPPGPPGPPGPP). Pro963 bears the 3-hydroxyproline mark. Residue Pro964 is modified to 4-hydroxyproline. Pro966 carries the 3-hydroxyproline modification. Pro967 carries the post-translational modification 4-hydroxyproline. 3-hydroxyproline is present on Pro969. Pro970, Pro973, and Pro976 each carry 4-hydroxyproline.

This sequence belongs to the fibrillar collagen family. In terms of assembly, trimers of one alpha 2(I) and two alpha 1(I) chains. Contains mostly 4-hydroxyproline. Proline residues at the third position of the tripeptide repeating unit (G-X-Y) are hydroxylated in some or all of the chains. In terms of processing, contains 3-hydroxyproline at a few sites. This modification occurs on the first proline residue in the sequence motif Gly-Pro-Hyp, where Hyp is 4-hydroxyproline. Post-translationally, lysine residues at the third position of the tripeptide repeating unit (G-X-Y) are 5-hydroxylated in some or all of the chains. O-glycosylated on hydroxylated lysine residues. The O-linked glycan consists of a Glc-Gal disaccharide. In terms of tissue distribution, expressed in bones.

The protein localises to the secreted. Its subcellular location is the extracellular space. It is found in the extracellular matrix. Type I collagen is a member of group I collagen (fibrillar forming collagen). In Acratocnus ye (Hispaniolan ground sloth), this protein is Collagen alpha-1(I) chain.